The following is a 270-amino-acid chain: NAD(P)H-hydrate epimerase (270 aa).

The YjeF N-terminal domain maps to 25–234; the sequence is FQQLMDLMQN…DLLAPEAIYQ (210 aa). 73-77 is a binding site for (6S)-NADPHX; that stretch reads DNGGQ. K(+)-binding residues include Asn-74 and Asp-144. Residues 148-154 and Glu-177 contribute to the (6S)-NADPHX site; that span reads GVGLYGH. Thr-180 contacts K(+).

The protein belongs to the NnrE/AIBP family. K(+) serves as cofactor.

It carries out the reaction (6R)-NADHX = (6S)-NADHX. The enzyme catalyses (6R)-NADPHX = (6S)-NADPHX. In terms of biological role, catalyzes the epimerization of the S- and R-forms of NAD(P)HX, a damaged form of NAD(P)H that is a result of enzymatic or heat-dependent hydration. This is a prerequisite for the S-specific NAD(P)H-hydrate dehydratase to allow the repair of both epimers of NAD(P)HX. The protein is NAD(P)H-hydrate epimerase of Legionella pneumophila (strain Corby).